Here is a 652-residue protein sequence, read N- to C-terminus: MSAFPASPQPSAFPASPQPSAFPASPQPSASPVSPRHCVSPSSGTLPSSSSPSVSSCALRGLSSSSSALSRPPFSSFPASPAFSRRCMLTESEMGKTRSLKWLRFRCILGACLLHFCLGGSHTIGNLLPYLIGFIRNAQATSAVSYKDGLSIYAWAIICQGVGGFLGTTLEKKAGTKKTAFLGSAWMTLGLALCGVCTHDLSLFLIAYGVVTALGCGVAYPVPLAATLKLSPAEDKGWVSGLLFFARGLSVCILCPFQSFFLHQPPEVFLSLIPAPLLPYLSSVASDTASASRLSSLNGKRAAPLPSPGGERFLTDQAVLDRLPALFFVMAGVFACIQLLGVLLLVDPERTSAADEAAADAAERQKLLYEDPQGASRASAGRSSSCSASQVFASLVLTPQDICSSPSFWRLFLMLLLSWQSLFFVQLFWKVLPLYPEASLAASAAAPAPLDSLFASVVRRVPRALASASRPDPRALHAAADAWSLTGSSWSFANDFFLSCLGGLLGALCCFGRLLWGYIGGGIGYMRSTVVMNALTAPCLFALSTYALQSPQLYAACLALVHVCHGGIFSLFPSVTSDLFGHKNVGPVFSLLFAARLAAVALAAIWINIALTYGNLHMVVGALGVCHLVSIGTTFFFHPTDALPYRFPTYSP.

At 1–45 (MSAFPASPQPSAFPASPQPSAFPASPQPSASPVSPRHCVSPSSGT) the chain is on the cytoplasmic side. The interval 1–53 (MSAFPASPQPSAFPASPQPSAFPASPQPSASPVSPRHCVSPSSGTLPSSSSPS) is disordered. Transmembrane regions (helical) follow at residues 46-66 (LPSS…SSSS), 126-146 (NLLP…AVSY), 167-187 (GTTL…SAWM), 189-209 (LGLA…IAYG), 212-232 (TALG…KLSP), 278-298 (LPYL…SSLN), 345-365 (LVDP…AERQ), 385-405 (SCSA…ICSS), 417-437 (LSWQ…LYPE), 445-465 (AAPA…PRAL), 467-487 (SASR…SLTG), and 515-535 (LWGY…MNAL). Topologically, residues 536-652 (TAPCLFALST…LPYRFPTYSP (117 aa)) are cytoplasmic.

The protein belongs to the major facilitator superfamily. In terms of assembly, interacts with apicoplast pyruvate carrier 1.

It localises to the plastid. The protein localises to the apicoplast. Its subcellular location is the membrane. Functionally, along with apicoplast pyruvate carrier 1, forms apicoplast pyruvate carrier (APC) complex, which transports pyruvate into the apicoplast and may also transport amino acids like methionine, serine, glycine and tryptophan with low efficiency. Required for maintaining pyruvate-dependent metabolic activities in the apicoplast, such as synthesis of fatty acids, isopentenyl pyrophosphate (IPP), dimethylallyl pyrophosphate (DMAPP) and methylerythritol 4-phosphate (MEP). Required for maintaining the integrity of the apicoplast. Required for normal parasite growth. The polypeptide is Apicoplast pyruvate carrier 2 (Toxoplasma gondii).